Reading from the N-terminus, the 690-residue chain is Calpain-9 (690 aa).

The interval 1–24 (MPYLHRSLRPQPQPVPRDARTVHS) is disordered. The 296-residue stretch at 42–337 (LFEDADFPAS…FDKVEICNLT (296 aa)) folds into the Calpain catalytic domain. Ca(2+) contacts are provided by leucine 81, glycine 83, and aspartate 88. Cysteine 97 is a catalytic residue. Glutamate 167 is a binding site for Ca(2+). Catalysis depends on residues histidine 254 and asparagine 278. 5 residues coordinate Ca(2+): glutamate 284, aspartate 291, leucine 312, aspartate 314, and glutamate 316. The segment at 338-521 (PDALEDNTLH…PQEEETEEER (184 aa)) is domain III. The segment at 522 to 690 (QFRALFRRIA…NEFINLTMNI (169 aa)) is domain IV. EF-hand domains lie at 534–552 (DMEVSAEELEYVLNAVLQK), 561–589 (LSLLSCRNIISLMDTSGNGKMEFEEFRVF), and 591–626 (DKLRYWMDLFLQFDVDKSGTMSSYELRTALKAAGFQ). Residues aspartate 574, serine 576, asparagine 578, lysine 580, glutamate 585, aspartate 604, aspartate 606, serine 608, threonine 610, and glutamate 615 each contribute to the Ca(2+) site.

The protein belongs to the peptidase C2 family. In terms of tissue distribution, predominantly expressed in stomach and small intestine, although low levels of expression in other organs.

Functionally, calcium-regulated non-lysosomal thiol-protease. In Rattus norvegicus (Rat), this protein is Calpain-9 (Capn9).